The primary structure comprises 1909 residues: DENN domain-containing protein 4C (1909 aa).

The MABP domain occupies Lys40–Val199. The 174-residue stretch at Val191–Pro364 folds into the uDENN domain. Residues Pro385 to Lys521 form the cDENN domain. The region spanning Leu523 to Gly641 is the dDENN domain. Residues Ser703, Ser737, and Ser741 each carry the phosphoserine modification. Residues Val821–Ala855 form a PPR repeat. A phosphoserine mark is found at Glu953, Ser965, Ser968, and Ser973. Position 975 is a phosphothreonine (Thr975). A phosphoserine mark is found at Ser989, Ser996, Ser1003, Ser1046, Ser1061, Ser1099, Ser1126, Ser1184, Ser1225, Ser1244, Ser1252, and Ser1278. Disordered regions lie at residues Lys1243–Ser1263 and Ser1277–Leu1338. The span at Ser1296–Ser1316 shows a compositional bias: polar residues. Ser1325, Ser1337, and Ser1346 each carry phosphoserine. Positions Ser1419–Thr1474 are disordered. Residues Leu1426–Gly1440 are compositionally biased toward low complexity. The span at Lys1459–His1468 shows a compositional bias: basic and acidic residues. Phosphoserine is present on residues Ser1623, Ser1627, Ser1629, Ser1640, and Ser1799.

Post-translationally, phosphorylated in response to insulin.

The protein localises to the cytoplasmic vesicle membrane. The protein resides in the cell membrane. Its subcellular location is the cytoplasm. It is found in the cytosol. Functionally, guanine nucleotide exchange factor (GEF) activating RAB10. Promotes the exchange of GDP to GTP, converting inactive GDP-bound RAB10 into its active GTP-bound form. Thereby, stimulates SLC2A4/GLUT4 glucose transporter-enriched vesicles delivery to the plasma membrane in response to insulin. The sequence is that of DENN domain-containing protein 4C (DENND4C) from Homo sapiens (Human).